Consider the following 390-residue polypeptide: Guanine nucleotide-binding protein alpha-7 subunit (390 aa).

2 stretches are compositionally biased toward low complexity: residues 1–12 and 22–42; these read MSSTTTNTTTAT and SSSP…MSPS. Positions 1 to 42 are disordered; that stretch reads MSSTTTNTTTATPAIQVNGNQSSSPQSPSSSTSTLSPPMSPS. Residues 70–390 enclose the G-alpha domain; the sequence is SELKLLLLGT…TRQTMEEGGI (321 aa). Residues 73 to 86 form a G1 motif region; the sequence is KLLLLGTGDSGKST. GTP contacts are provided by residues 78 to 85, 213 to 219, 238 to 242, 307 to 310, and alanine 363; these read GTGDSGKS, LYTRVAS, DVAGQ, and NKRD. Position 85 (serine 85) interacts with Mg(2+). The G2 motif stretch occupies residues 211–219; sequence DILYTRVAS. The interval 234-243 is G3 motif; it reads FRMIDVAGQR. Positions 303-310 are G4 motif; it reads ILFLNKRD. Positions 361–366 are G5 motif; the sequence is TTATDT.

This sequence belongs to the G-alpha family. In terms of assembly, g proteins are composed of 3 units; alpha, beta and gamma. The alpha chain contains the guanine nucleotide binding site.

Its function is as follows. Guanine nucleotide-binding proteins (G proteins) are involved as modulators or transducers in various transmembrane signaling systems. This chain is Guanine nucleotide-binding protein alpha-7 subunit (gpaG), found in Dictyostelium discoideum (Social amoeba).